The chain runs to 648 residues: Biosynthetic arginine decarboxylase (648 aa).

Lysine 109 bears the N6-(pyridoxal phosphate)lysine mark. Position 291–301 (isoleucine 291–phenylalanine 301) interacts with substrate.

It belongs to the Orn/Lys/Arg decarboxylase class-II family. SpeA subfamily. It depends on Mg(2+) as a cofactor. Requires pyridoxal 5'-phosphate as cofactor.

The catalysed reaction is L-arginine + H(+) = agmatine + CO2. Its pathway is amine and polyamine biosynthesis; agmatine biosynthesis; agmatine from L-arginine: step 1/1. In terms of biological role, catalyzes the biosynthesis of agmatine from arginine. The polypeptide is Biosynthetic arginine decarboxylase (Prochlorococcus marinus (strain MIT 9301)).